The primary structure comprises 67 residues: 2S seed storage albumin protein (67 aa).

It belongs to the 2S seed storage albumins family. In terms of assembly, heterodimer of a small and a large chain linked by disulfide bonds.

Its subcellular location is the vacuole. The protein resides in the aleurone grain. This is a 2S seed storage protein. In Matteuccia struthiopteris (European ostrich fern), this protein is 2S seed storage albumin protein.